The sequence spans 337 residues: Neurogenic differentiation factor 6 (337 aa).

The tract at residues Q28–R80 is disordered. The segment covering E54–N71 has biased composition (acidic residues). Residues R80–K86 carry the Nuclear localization signal motif. A bHLH domain is found at F94–L146.

Efficient DNA binding requires dimerization with another bHLH protein. As to expression, specific to the nervous system of both embryos and adults. Highest levels in the cortical plate of the cerebrum.

Its subcellular location is the nucleus. Activates E box-dependent transcription in collaboration with TCF3/E47. May be a trans-acting factor involved in the development and maintenance of the mammalian nervous system. Transactivates the promoter of its own gene. The chain is Neurogenic differentiation factor 6 (Neurod6) from Mus musculus (Mouse).